Reading from the N-terminus, the 420-residue chain is POU domain, class 4, transcription factor 1 (420 aa).

Residues 57–66 (RAEALAAVDI) carry the POU-IV box motif. Disordered regions lie at residues 94 to 117 (STVP…GDLL) and 132 to 200 (GGAG…XGHL). The segment covering 99–108 (AHHHHHHHHH) has biased composition (basic residues). Gly residues-rich tracts occupy residues 132–165 (GGAG…GPGV) and 172–184 (PGGG…GGLL). In terms of domain architecture, POU-specific spans 261-338 (DSDTDPRELE…ILQAWLEEAE (78 aa)). The segment at residues 356-415 (KKRKRTSIAAPEKRSLEAYFAVQPRPSSEKIAAIAEKLDLKKNVVRVWFCNQRQKQKRMK) is a DNA-binding region (homeobox).

The protein belongs to the POU transcription factor family. Class-4 subfamily. Interacts (via N-terminus) with RIT2; the interaction controls POU4F1 transactivation activity on some neuronal target genes. Isoform 1 interacts with POU4F2; this interaction inhibits both POU4F1 DNA-binding and transcriptional activities. Isoform 1 interacts (C-terminus) with ESR1 (via DNA-binding domain); this interaction decreases the estrogen receptor ESR1 transcriptional activity in a DNA- and ligand 17-beta-estradiol-independent manner. Detected in brain, spinal cord and dorsal root ganglion. Isoform 2 is detected in brain, spinal cord, dorsal root ganglion and spleen.

It is found in the nucleus. The protein localises to the cytoplasm. Multifunctional transcription factor with different regions mediating its different effects. Acts by binding (via its C-terminal domain) to sequences related to the consensus octamer motif 5'-ATGCAAAT-3' in the regulatory regions of its target genes. Regulates the expression of specific genes involved in differentiation and survival within a subset of neuronal lineages. It has been shown that activation of some of these genes requires its N-terminal domain, maybe through a neuronal-specific cofactor. Activates BCL2 expression and protects neuronal cells from apoptosis (via the N-terminal domain). Induces neuronal process outgrowth and the coordinate expression of genes encoding synaptic proteins. Exerts its major developmental effects in somatosensory neurons and in brainstem nuclei involved in motor control. Stimulates the binding affinity of the nuclear estrogene receptor ESR1 to DNA estrogen response element (ERE), and hence modulates ESR1-induced transcriptional activity. May positively regulate POU4F2 and POU4F3. Regulates dorsal root ganglion sensory neuron specification and axonal projection into the spinal cord. Plays a role in TNFSF11-mediated terminal osteoclast differentiation. Negatively regulates its own expression interacting directly with a highly conserved autoregulatory domain surrounding the transcription initiation site. Functionally, able to act as transcription factor, cannot regulate the expression of the same subset of genes than isoform 1. Does not have anitapoptotic effect on neuronal cells. In Rattus norvegicus (Rat), this protein is POU domain, class 4, transcription factor 1 (Pou4f1).